A 76-amino-acid polypeptide reads, in one-letter code: Omega-scoloptoxin(13)-Ssm2a (76 aa).

The first 22 residues, 1 to 22 (MAYIYALIFAIVVCMNTDVIQA), serve as a signal peptide directing secretion.

Contains 4 disulfide bonds. In terms of tissue distribution, expressed by the venom gland.

It is found in the secreted. Functionally, inhibits voltage-gated calcium channel (Cav) currents in DRG neurons (IC(50)=1590 nM). The chain is Omega-scoloptoxin(13)-Ssm2a from Scolopendra mutilans (Chinese red-headed centipede).